The chain runs to 133 residues: Holo-[acyl-carrier-protein] synthase (133 aa).

Positions 8 and 64 each coordinate Mg(2+).

Belongs to the P-Pant transferase superfamily. AcpS family. Requires Mg(2+) as cofactor.

The protein localises to the cytoplasm. It carries out the reaction apo-[ACP] + CoA = holo-[ACP] + adenosine 3',5'-bisphosphate + H(+). Transfers the 4'-phosphopantetheine moiety from coenzyme A to a Ser of acyl-carrier-protein. This is Holo-[acyl-carrier-protein] synthase from Shewanella loihica (strain ATCC BAA-1088 / PV-4).